The following is a 475-amino-acid chain: Ribulose bisphosphate carboxylase large chain (475 aa).

Positions 1-2 (MV) are excised as a propeptide. An N-acetylproline modification is found at P3. K14 bears the N6,N6,N6-trimethyllysine mark. Substrate-binding residues include N123 and T173. Catalysis depends on K175, which acts as the Proton acceptor. K177 contacts substrate. Mg(2+) contacts are provided by K201, D203, and E204. N6-carboxylysine is present on K201. Residue H294 is the Proton acceptor of the active site. 3 residues coordinate substrate: R295, H327, and S379.

Belongs to the RuBisCO large chain family. Type I subfamily. Heterohexadecamer of 8 large chains and 8 small chains. Requires Mg(2+) as cofactor.

The protein resides in the plastid. It is found in the chloroplast. It carries out the reaction 2 (2R)-3-phosphoglycerate + 2 H(+) = D-ribulose 1,5-bisphosphate + CO2 + H2O. The catalysed reaction is D-ribulose 1,5-bisphosphate + O2 = 2-phosphoglycolate + (2R)-3-phosphoglycerate + 2 H(+). In terms of biological role, ruBisCO catalyzes two reactions: the carboxylation of D-ribulose 1,5-bisphosphate, the primary event in carbon dioxide fixation, as well as the oxidative fragmentation of the pentose substrate in the photorespiration process. Both reactions occur simultaneously and in competition at the same active site. The polypeptide is Ribulose bisphosphate carboxylase large chain (Stigeoclonium helveticum (Green alga)).